A 251-amino-acid polypeptide reads, in one-letter code: uncharacterized protein (251 aa).

This is an uncharacterized protein from Caenorhabditis elegans.